The primary structure comprises 217 residues: MINLILLGLPGAGKGTASESIVDKYHLAHISTGDMFREAMANETPVGLEAKSYIDKGDLVPDEVTAKLVEERLKQPDTKNGFILDGFPRTTVQAELLEGITKRLEKPLTNVIAIDVDEDVLIKRLSARYICKNCGATYNKISNPTKVEGTCDRCGGHEFFQREDDKPEVVKNRLEVNKKMNTPLRDFYEEKGILSTVNGEQTPEKVFEDIDKILSKD.

11–16 (GAGKGT) lines the ATP pocket. Residues 31–60 (STGDMFREAMANETPVGLEAKSYIDKGDLV) form an NMP region. AMP-binding positions include T32, R37, 58 to 60 (DLV), 86 to 89 (GFPR), and Q93. Residues 127-165 (ARYICKNCGATYNKISNPTKVEGTCDRCGGHEFFQREDD) are LID. Position 128 (R128) interacts with ATP. Zn(2+) is bound by residues C131 and C134. 137–138 (TY) provides a ligand contact to ATP. The Zn(2+) site is built by C151 and C154. AMP-binding residues include R162 and R173. Q201 serves as a coordination point for ATP.

This sequence belongs to the adenylate kinase family. Monomer.

The protein localises to the cytoplasm. It carries out the reaction AMP + ATP = 2 ADP. It participates in purine metabolism; AMP biosynthesis via salvage pathway; AMP from ADP: step 1/1. Functionally, catalyzes the reversible transfer of the terminal phosphate group between ATP and AMP. Plays an important role in cellular energy homeostasis and in adenine nucleotide metabolism. The sequence is that of Adenylate kinase from Lactobacillus gasseri (strain ATCC 33323 / DSM 20243 / BCRC 14619 / CIP 102991 / JCM 1131 / KCTC 3163 / NCIMB 11718 / NCTC 13722 / AM63).